The chain runs to 229 residues: MKRAVVVFSGGQDSTTCLIQALHHYDDVHCITFDYGQRHRAEIDVARRLAGQLGASAHKVLDVGLLNELAISSLTRDNIPVPTQSEDGIPNTFVPGRNVLFLTLAAIYAYQVEAEAVITGVCETDFSGYPDCRDQFVQALNHAVCLGMARDIRFETPLMWLNKAETWALADYYGQLARVRHDTLTCYNGVQGDGCGHCAACHLRAHGLQQYLANPAAVMAALKRKSGLQ.

Position 8-18 (8-18) interacts with ATP; sequence FSGGQDSTTCL. C186, C195, C198, and C201 together coordinate Zn(2+).

The protein belongs to the QueC family. Zn(2+) serves as cofactor.

It carries out the reaction 7-carboxy-7-deazaguanine + NH4(+) + ATP = 7-cyano-7-deazaguanine + ADP + phosphate + H2O + H(+). It participates in purine metabolism; 7-cyano-7-deazaguanine biosynthesis. In terms of biological role, catalyzes the ATP-dependent conversion of 7-carboxy-7-deazaguanine (CDG) to 7-cyano-7-deazaguanine (preQ(0)). The polypeptide is 7-cyano-7-deazaguanine synthase (Edwardsiella ictaluri (strain 93-146)).